Here is a 1058-residue protein sequence, read N- to C-terminus: Receptor-type guanylate cyclase gcy-22 (1058 aa).

The first 23 residues, 1–23, serve as a signal peptide directing secretion; the sequence is MSFISKCFICLLFSTYFLPPVNS. Residues 25–470 lie on the Extracellular side of the membrane; the sequence is VLQVGFLAAN…PKSFTDQYLA (446 aa). Residues Asn36, Asn73, Asn201, Asn215, Asn277, Asn302, Asn324, Asn350, and Asn386 are each glycosylated (N-linked (GlcNAc...) asparagine). A helical transmembrane segment spans residues 471-491; the sequence is IILGCTAAALVLIIAVISTIV. The Cytoplasmic segment spans residues 492 to 1058; sequence FLVRSKRQEE…IEAKENGESI (567 aa). Residues 501 to 809 enclose the Protein kinase domain; sequence EERLNQLWQV…SSNLMDHVFN (309 aa). Residues 811–840 are a coiled coil; the sequence is LEQYASNLEDEVQARMKELTEEKKRSDVLL. In terms of domain architecture, Guanylate cyclase spans 867–997; the sequence is TIFFSDVVSF…DSVNTASRME (131 aa).

It belongs to the adenylyl cyclase class-4/guanylyl cyclase family. Expression in ASER neuron begins at an early larval stage and is maintained in the adult.

Its subcellular location is the cell membrane. It carries out the reaction GTP = 3',5'-cyclic GMP + diphosphate. In terms of biological role, guanylate cyclase involved in the production of the second messenger cGMP. Regulates chemotaxis responses toward Li(1-), Mg(2+), Cl(1-), Br(1)- and I(1-) salt ions and methionine in ASE right (ASER) sensory neuron. May regulate ASER neuronal activity such as axon sprouting and calcium responses to changes in salt concentrations. The chain is Receptor-type guanylate cyclase gcy-22 from Caenorhabditis elegans.